The following is a 423-amino-acid chain: UPF0229 protein Pfl01_5140 (423 aa).

The tract at residues 83-108 (TAGEHIARPPGGGGGRGPGKAGNSGE) is disordered. Positions 92-107 (PGGGGGRGPGKAGNSG) are enriched in gly residues.

This sequence belongs to the UPF0229 family.

This chain is UPF0229 protein Pfl01_5140, found in Pseudomonas fluorescens (strain Pf0-1).